The primary structure comprises 532 residues: Amidophosphoribosyltransferase 3, chloroplastic (532 aa).

The N-terminal 59 residues, 1–59, are a transit peptide targeting the chloroplast; that stretch reads MAFSVEEISSILPNSLSANPRNVSQNTISPSFFKPSLKPYASKTLISLSCRRSLSPVFS. Cysteine 77 serves as the catalytic Nucleophile. In terms of domain architecture, Glutamine amidotransferase type-2 spans 77–296; the sequence is CGVVGIHGDP…PGEIVVVDRN (220 aa). 4 residues coordinate [4Fe-4S] cluster: cysteine 313, cysteine 459, cysteine 511, and cysteine 514.

It in the C-terminal section; belongs to the purine/pyrimidine phosphoribosyltransferase family. Requires [4Fe-4S] cluster as cofactor. Mg(2+) serves as cofactor. As to expression, mostly expressed at low levels in leaves, and, to a lower extent, in cotyledons.

Its subcellular location is the plastid. The protein localises to the chloroplast stroma. The catalysed reaction is 5-phospho-beta-D-ribosylamine + L-glutamate + diphosphate = 5-phospho-alpha-D-ribose 1-diphosphate + L-glutamine + H2O. It functions in the pathway purine metabolism; IMP biosynthesis via de novo pathway; N(1)-(5-phospho-D-ribosyl)glycinamide from 5-phospho-alpha-D-ribose 1-diphosphate: step 1/2. Inhibited by the phenyltriazole acetic acid compound [5-(4-chlorophenyl)-1-isopropyl-1H-[1,2,4]triazol-3-yl]-acetic acid (DAS734), a bleaching herbicide. Repressed by AMP, ADP, ATP and GTP, and slightly by GMP. Functionally, catalyzes the first committed step of 'de novo' purine biosynthesis from glutamine. In Arabidopsis thaliana (Mouse-ear cress), this protein is Amidophosphoribosyltransferase 3, chloroplastic (ASE3).